The chain runs to 307 residues: Agmatinase (307 aa).

Mn(2+)-binding residues include histidine 128, aspartate 151, histidine 153, aspartate 155, aspartate 232, and aspartate 234.

Belongs to the arginase family. Agmatinase subfamily. Mn(2+) is required as a cofactor.

It carries out the reaction agmatine + H2O = urea + putrescine. Its pathway is amine and polyamine biosynthesis; putrescine biosynthesis via agmatine pathway; putrescine from agmatine: step 1/1. In terms of biological role, catalyzes the formation of putrescine from agmatine. This Photorhabdus laumondii subsp. laumondii (strain DSM 15139 / CIP 105565 / TT01) (Photorhabdus luminescens subsp. laumondii) protein is Agmatinase.